A 375-amino-acid polypeptide reads, in one-letter code: Erythronate-4-phosphate dehydrogenase (375 aa).

Residue serine 49 coordinates substrate. NAD(+)-binding residues include aspartate 150 and threonine 178. Residue arginine 211 is part of the active site. Aspartate 231 is an NAD(+) binding site. The active site involves glutamate 236. Histidine 253 functions as the Proton donor in the catalytic mechanism. Glycine 256 is an NAD(+) binding site.

It belongs to the D-isomer specific 2-hydroxyacid dehydrogenase family. PdxB subfamily. In terms of assembly, homodimer.

It is found in the cytoplasm. It catalyses the reaction 4-phospho-D-erythronate + NAD(+) = (R)-3-hydroxy-2-oxo-4-phosphooxybutanoate + NADH + H(+). Its pathway is cofactor biosynthesis; pyridoxine 5'-phosphate biosynthesis; pyridoxine 5'-phosphate from D-erythrose 4-phosphate: step 2/5. In terms of biological role, catalyzes the oxidation of erythronate-4-phosphate to 3-hydroxy-2-oxo-4-phosphonooxybutanoate. The chain is Erythronate-4-phosphate dehydrogenase from Hydrogenovibrio crunogenus (strain DSM 25203 / XCL-2) (Thiomicrospira crunogena).